The following is a 982-amino-acid chain: Chromosome partition protein Smc (982 aa).

Position 33-40 (33-40) interacts with ATP; that stretch reads PNGSGKSN. 3 coiled-coil regions span residues 171–231, 280–310, and 337–377; these read RYTK…ELAV, SADMQSNELQKELQDIYQKINELEQRKVIID, and QTQL…QIEK. An SMC hinge domain is found at 416–535; the sequence is TGILNTLGTF…AKDLNSAINL (120 aa). Coiled-coil stretches lie at residues 575–718 and 753–822; these read SASL…SARE and VKLS…IASN.

Belongs to the SMC family. Homodimer.

The protein localises to the cytoplasm. Functionally, required for chromosome condensation and partitioning. The protein is Chromosome partition protein Smc of Mycoplasma genitalium (strain ATCC 33530 / DSM 19775 / NCTC 10195 / G37) (Mycoplasmoides genitalium).